Reading from the N-terminus, the 217-residue chain is Phosphatidylserine decarboxylase proenzyme (217 aa).

Residue S182 is the Schiff-base intermediate with substrate; via pyruvic acid of the active site. S182 carries the pyruvic acid (Ser); by autocatalysis modification.

This sequence belongs to the phosphatidylserine decarboxylase family. PSD-A subfamily. In terms of assembly, heterodimer of a large membrane-associated beta subunit and a small pyruvoyl-containing alpha subunit. It depends on pyruvate as a cofactor. In terms of processing, is synthesized initially as an inactive proenzyme. Formation of the active enzyme involves a self-maturation process in which the active site pyruvoyl group is generated from an internal serine residue via an autocatalytic post-translational modification. Two non-identical subunits are generated from the proenzyme in this reaction, and the pyruvate is formed at the N-terminus of the alpha chain, which is derived from the carboxyl end of the proenzyme. The post-translation cleavage follows an unusual pathway, termed non-hydrolytic serinolysis, in which the side chain hydroxyl group of the serine supplies its oxygen atom to form the C-terminus of the beta chain, while the remainder of the serine residue undergoes an oxidative deamination to produce ammonia and the pyruvoyl prosthetic group on the alpha chain.

It is found in the cell membrane. It carries out the reaction a 1,2-diacyl-sn-glycero-3-phospho-L-serine + H(+) = a 1,2-diacyl-sn-glycero-3-phosphoethanolamine + CO2. Its pathway is phospholipid metabolism; phosphatidylethanolamine biosynthesis; phosphatidylethanolamine from CDP-diacylglycerol: step 2/2. In terms of biological role, catalyzes the formation of phosphatidylethanolamine (PtdEtn) from phosphatidylserine (PtdSer). This Prosthecochloris aestuarii (strain DSM 271 / SK 413) protein is Phosphatidylserine decarboxylase proenzyme.